We begin with the raw amino-acid sequence, 126 residues long: Probable flagellum biosynthesis repressor protein FlbT (126 aa).

The protein belongs to the FlbT family.

Has a post-transcriptional repressor function in flagellum biogenesis. Associates with the 5'-UTR of fljK mRNA and promotes its degradation. The chain is Probable flagellum biosynthesis repressor protein FlbT from Rhodopseudomonas palustris (strain ATCC BAA-98 / CGA009).